We begin with the raw amino-acid sequence, 192 residues long: Adenylate kinase (192 aa).

Residue 10–18 (GVPGVGGTT) participates in ATP binding.

It belongs to the archaeal adenylate kinase family. As to quaternary structure, monomer.

It localises to the cytoplasm. The catalysed reaction is AMP + ATP = 2 ADP. This Methanococcus maripaludis (strain DSM 14266 / JCM 13030 / NBRC 101832 / S2 / LL) protein is Adenylate kinase.